Consider the following 555-residue polypeptide: Dihydroxy-acid dehydratase (555 aa).

Cys46 contacts [2Fe-2S] cluster. A Mg(2+)-binding site is contributed by Asp78. Cys119 is a [2Fe-2S] cluster binding site. Positions 120 and 121 each coordinate Mg(2+). Lys121 carries the N6-carboxylysine modification. Position 191 (Cys191) interacts with [2Fe-2S] cluster. Glu442 serves as a coordination point for Mg(2+). The Proton acceptor role is filled by Ser468.

The protein belongs to the IlvD/Edd family. As to quaternary structure, homodimer. [2Fe-2S] cluster is required as a cofactor. It depends on Mg(2+) as a cofactor.

It catalyses the reaction (2R)-2,3-dihydroxy-3-methylbutanoate = 3-methyl-2-oxobutanoate + H2O. It carries out the reaction (2R,3R)-2,3-dihydroxy-3-methylpentanoate = (S)-3-methyl-2-oxopentanoate + H2O. Its pathway is amino-acid biosynthesis; L-isoleucine biosynthesis; L-isoleucine from 2-oxobutanoate: step 3/4. It participates in amino-acid biosynthesis; L-valine biosynthesis; L-valine from pyruvate: step 3/4. Functionally, functions in the biosynthesis of branched-chain amino acids. Catalyzes the dehydration of (2R,3R)-2,3-dihydroxy-3-methylpentanoate (2,3-dihydroxy-3-methylvalerate) into 2-oxo-3-methylpentanoate (2-oxo-3-methylvalerate) and of (2R)-2,3-dihydroxy-3-methylbutanoate (2,3-dihydroxyisovalerate) into 2-oxo-3-methylbutanoate (2-oxoisovalerate), the penultimate precursor to L-isoleucine and L-valine, respectively. The chain is Dihydroxy-acid dehydratase from Thermus thermophilus (strain ATCC 27634 / DSM 579 / HB8).